We begin with the raw amino-acid sequence, 423 residues long: Kynureninase (423 aa).

Pyridoxal 5'-phosphate-binding positions include Leu-105, Ser-106, 133–136, Asp-218, His-221, and Tyr-243; that span reads FPSD. The residue at position 244 (Lys-244) is an N6-(pyridoxal phosphate)lysine. Pyridoxal 5'-phosphate is bound by residues Trp-273 and Asn-301.

This sequence belongs to the kynureninase family. In terms of assembly, homodimer. It depends on pyridoxal 5'-phosphate as a cofactor.

The catalysed reaction is L-kynurenine + H2O = anthranilate + L-alanine + H(+). It carries out the reaction 3-hydroxy-L-kynurenine + H2O = 3-hydroxyanthranilate + L-alanine + H(+). Its pathway is amino-acid degradation; L-kynurenine degradation; L-alanine and anthranilate from L-kynurenine: step 1/1. It functions in the pathway cofactor biosynthesis; NAD(+) biosynthesis; quinolinate from L-kynurenine: step 2/3. Functionally, catalyzes the cleavage of L-kynurenine (L-Kyn) and L-3-hydroxykynurenine (L-3OHKyn) into anthranilic acid (AA) and 3-hydroxyanthranilic acid (3-OHAA), respectively. This is Kynureninase from Xanthomonas axonopodis pv. citri (strain 306).